Consider the following 684-residue polypeptide: Glycine--tRNA ligase beta subunit (684 aa).

Belongs to the class-II aminoacyl-tRNA synthetase family. As to quaternary structure, tetramer of two alpha and two beta subunits.

It is found in the cytoplasm. The catalysed reaction is tRNA(Gly) + glycine + ATP = glycyl-tRNA(Gly) + AMP + diphosphate. The polypeptide is Glycine--tRNA ligase beta subunit (Pseudomonas entomophila (strain L48)).